The primary structure comprises 180 residues: Large ribosomal subunit protein uL5c (180 aa).

It belongs to the universal ribosomal protein uL5 family. As to quaternary structure, part of the 50S ribosomal subunit; contacts the 5S rRNA.

It is found in the plastid. It localises to the chloroplast. In terms of biological role, binds 5S rRNA, forms part of the central protuberance of the 50S subunit. The chain is Large ribosomal subunit protein uL5c (rpl5) from Stigeoclonium helveticum (Green alga).